A 570-amino-acid polypeptide reads, in one-letter code: Zeta-carotene desaturase, chloroplastic/chromoplastic (570 aa).

Low complexity predominate over residues 1 to 16; it reads MASVAATTTLAPALAP. Positions 1-33 are disordered; it reads MASVAATTTLAPALAPRRARPGTGLVPPRRASA.

Belongs to the zeta carotene desaturase family. The cofactor is NAD(+). NADP(+) is required as a cofactor. It depends on FAD as a cofactor.

It localises to the plastid. The protein localises to the chloroplast. It is found in the chromoplast. The catalysed reaction is 9,9'-di-cis-zeta-carotene + 2 a quinone = 7,7',9,9'-tetra-cis-lycopene + 2 a quinol. The protein operates within carotenoid biosynthesis; lycopene biosynthesis. Functionally, catalyzes the conversion of zeta-carotene to lycopene via the intermediary of neurosporene. It carries out two consecutive desaturations (introduction of double bonds) at positions C-7 and C-7'. This is Zeta-carotene desaturase, chloroplastic/chromoplastic (ZDS1) from Zea mays (Maize).